A 711-amino-acid chain; its full sequence is Nuclear intron maturase 1, mitochondrial (711 aa).

One can recognise a Reverse transcriptase domain in the interval 147–459; it reads KDKISMNGGE…RGIQFLDHII (313 aa). The intron maturase type-2 stretch occupies residues 484-653; that stretch reads GTLLSVSASL…QVLQEYIRLQ (170 aa).

Belongs to the plant nuclear intron maturase (nMat) family. As to expression, expressed at low levels in seedlings and accumulates in adult plants.

The protein resides in the mitochondrion. In terms of biological role, nuclear-encoded maturase required for splicing of group-II introns in mitochondria. Necessary for mitochondrial biogenesis during early developmental stages. Involved in the splicing of mitochondrial NAD4 transcripts. Required for trans-splicing of NAD1 intron 1 and also functions in cis-splicing of NAD2 intron 1 and NAD4 intron 2. Required for the regulation of fundamental metabolic pathways such as amino acid metabolism, triacylglycerol degradation and polysaccharide synthesis (cellulose and starch) during the early stage of plant growth. Implicated in stress responses. This is Nuclear intron maturase 1, mitochondrial from Arabidopsis thaliana (Mouse-ear cress).